The sequence spans 570 residues: Berberine bridge enzyme-like 19 (570 aa).

An N-terminal signal peptide occupies residues 1–30 (MLTTPPRTFVSVPFFFFFLLFLSLPLSSFS). A disulfide bridge links cysteine 42 with cysteine 105. A glycan (N-linked (GlcNAc...) asparagine) is linked at asparagine 80. Positions 83-257 (STLKPTIIIT…LGYKVKLVPV (175 aa)) constitute an FAD-binding PCMH-type domain. Positions 120 to 182 (HDYDGLSYIS…RVHGFPAGVC (63 aa)) form a cross-link, 6-(S-cysteinyl)-8alpha-(pros-histidyl)-FAD (His-Cys). Residues asparagine 341 and asparagine 359 are each glycosylated (N-linked (GlcNAc...) asparagine).

It belongs to the oxygen-dependent FAD-linked oxidoreductase family. It depends on FAD as a cofactor. In terms of processing, the FAD cofactor is bound via a bicovalent 6-S-cysteinyl, 8alpha-N1-histidyl FAD linkage.

The protein localises to the secreted. The protein resides in the cell wall. The polypeptide is Berberine bridge enzyme-like 19 (Arabidopsis thaliana (Mouse-ear cress)).